We begin with the raw amino-acid sequence, 248 residues long: Triosephosphate isomerase (248 aa).

Asn-9–Lys-11 lines the substrate pocket. Residue His-93 is the Electrophile of the active site. Glu-163 acts as the Proton acceptor in catalysis. Substrate contacts are provided by residues Gly-169, Ser-208, and Gly-229 to Gly-230.

It belongs to the triosephosphate isomerase family. In terms of assembly, homodimer.

The protein resides in the cytoplasm. The enzyme catalyses D-glyceraldehyde 3-phosphate = dihydroxyacetone phosphate. It functions in the pathway carbohydrate biosynthesis; gluconeogenesis. It participates in carbohydrate degradation; glycolysis; D-glyceraldehyde 3-phosphate from glycerone phosphate: step 1/1. Functionally, involved in the gluconeogenesis. Catalyzes stereospecifically the conversion of dihydroxyacetone phosphate (DHAP) to D-glyceraldehyde-3-phosphate (G3P). In Jannaschia sp. (strain CCS1), this protein is Triosephosphate isomerase.